The chain runs to 138 residues: Small ribosomal subunit protein uS11c (138 aa).

The tract at residues 1 to 23 (MAKTIPRIGSRKNGRIGSRKNTR) is disordered. Over residues 9 to 23 (GSRKNGRIGSRKNTR) the composition is skewed to basic residues.

Belongs to the universal ribosomal protein uS11 family. In terms of assembly, part of the 30S ribosomal subunit.

The protein resides in the plastid. Its subcellular location is the chloroplast. The chain is Small ribosomal subunit protein uS11c from Daucus carota (Wild carrot).